Here is a 65-residue protein sequence, read N- to C-terminus: Large ribosomal subunit protein bL35 (65 aa).

The protein belongs to the bacterial ribosomal protein bL35 family.

The protein is Large ribosomal subunit protein bL35 of Thermus thermophilus (strain ATCC BAA-163 / DSM 7039 / HB27).